A 296-amino-acid chain; its full sequence is Nucleotide-binding protein SGO_0954 (296 aa).

13-20 contributes to the ATP binding site; it reads GMSGAGKT. 63-66 contacts GTP; it reads DMRS.

It belongs to the RapZ-like family.

Functionally, displays ATPase and GTPase activities. In Streptococcus gordonii (strain Challis / ATCC 35105 / BCRC 15272 / CH1 / DL1 / V288), this protein is Nucleotide-binding protein SGO_0954.